The sequence spans 220 residues: Uracil phosphoribosyltransferase 2 (220 aa).

77-80 (ARDI) provides a ligand contact to GTP. Positions 87 and 113 each coordinate 5-phospho-alpha-D-ribose 1-diphosphate. Arg134 contacts GTP. 5-phospho-alpha-D-ribose 1-diphosphate contacts are provided by residues Asp140 and 140–148 (DPLLATGNS). Residue Tyr204 coordinates D-ribose 5-phosphate. Uracil contacts are provided by residues Val205 and 210 to 212 (GDF). 5-phospho-alpha-D-ribose 1-diphosphate is bound at residue Asp211.

The protein belongs to the UPRTase family. The cofactor is Mg(2+).

It carries out the reaction UMP + diphosphate = 5-phospho-alpha-D-ribose 1-diphosphate + uracil. It functions in the pathway pyrimidine metabolism; UMP biosynthesis via salvage pathway; UMP from uracil: step 1/1. Its activity is regulated as follows. Allosterically activated by GTP. Its function is as follows. Catalyzes the conversion of uracil and 5-phospho-alpha-D-ribose 1-diphosphate (PRPP) to UMP and diphosphate. This chain is Uracil phosphoribosyltransferase 2, found in Schizosaccharomyces pombe (strain 972 / ATCC 24843) (Fission yeast).